The chain runs to 228 residues: Interleukin-27 subunit beta (228 aa).

The N-terminal stretch at 1-18 (MSKLLFLSLALWASRSPG) is a signal peptide. Fibronectin type-III domains are found at residues 26-124 (ALSQ…VAER) and 127-224 (KPDP…VESA). N-linked (GlcNAc...) asparagine glycosylation is found at Asn54 and Asn104.

This sequence belongs to the type I cytokine receptor family. Type 3 subfamily. In terms of assembly, heterodimer with IL27/IL27A; not disulfide-linked. This heterodimer is known as interleukin IL-27. Heterodimer with IL12A; not disulfide-linked. This heterodimer is known as interleukin IL-35. Interacts with SQSTM1.

The protein resides in the secreted. Functionally, associates with IL27 to form the IL-27 interleukin, a heterodimeric cytokine which functions in innate immunity. IL-27 has pro- and anti-inflammatory properties, that can regulate T-helper cell development, suppress T-cell proliferation, stimulate cytotoxic T-cell activity, induce isotype switching in B-cells, and that has diverse effects on innate immune cells. Among its target cells are CD4 T-helper cells which can differentiate in type 1 effector cells (TH1), type 2 effector cells (TH2) and IL17 producing helper T-cells (TH17). It drives rapid clonal expansion of naive but not memory CD4 T-cells. It also strongly synergizes with IL-12 to trigger interferon-gamma/IFN-gamma production of naive CD4 T-cells, binds to the cytokine receptor WSX-1/TCCR. Another important role of IL-27 is its antitumor activity as well as its antiangiogenic activity with activation of production of antiangiogenic chemokines. The protein is Interleukin-27 subunit beta (Ebi3) of Mus musculus (Mouse).